The following is an 87-amino-acid chain: Apoptosis inducing factor BLCAP B (87 aa).

2 consecutive transmembrane segments (helical) span residues 19–39 (PALW…FLLE) and 43–63 (CTIC…SCWG).

This sequence belongs to the BLCAP family.

The protein resides in the cytoplasm. Its subcellular location is the nucleus. It localises to the membrane. In terms of biological role, acts as a tumor suppressor; induces growth arrest at G(1)/S checkpoint and apoptosis via RB1-dependent and p53/TP53- and NF-kappa-B-independent mechanisms. Modulates expression of genes involved in the regulation of proliferation, cell cycle and apoptosis. This is Apoptosis inducing factor BLCAP B (blcap-b) from Xenopus laevis (African clawed frog).